A 107-amino-acid polypeptide reads, in one-letter code: Phosphoribosyl-ATP pyrophosphatase (107 aa).

Belongs to the PRA-PH family.

The protein resides in the cytoplasm. The enzyme catalyses 1-(5-phospho-beta-D-ribosyl)-ATP + H2O = 1-(5-phospho-beta-D-ribosyl)-5'-AMP + diphosphate + H(+). Its pathway is amino-acid biosynthesis; L-histidine biosynthesis; L-histidine from 5-phospho-alpha-D-ribose 1-diphosphate: step 2/9. The polypeptide is Phosphoribosyl-ATP pyrophosphatase (Novosphingobium aromaticivorans (strain ATCC 700278 / DSM 12444 / CCUG 56034 / CIP 105152 / NBRC 16084 / F199)).